The primary structure comprises 490 residues: MSSLTSLTLKGALDGLEKGDFTSVELTRAHIDAIEAARGLNAFLLETPEQALSMAAASDARRALDAARPLDGIPLGIKDLFCTQGVRTTAASKILEPFVPQYESTVTSQLWRDGAVMLGKLNLDEFAMGSSNETSAYGPVVNPWRKAGSNQALTPGGSSGGSAAAVAADLCLGATATDTGGSIRQPAAFTGTVGIKPTYGRCSRWGVVAFASSLDQAGPIAKTVTDAALLLTSMSGHDPKDSTSLDVPVPDFSAFVGKSIKGLRIGVPQEYRVDGMPAEIEKLWADGIAWLKDAGCEIVEISLPHTKYALPAYYIVAPAEASSNLARYDGMRYGLRAEGSNLTEVYENTRAEGFGDEVKRRILIGTYVLSAGYYDAYYLKALKVRRRIAEDFDNAWERCDAILTPTAPSAAFGLGENSSDPIAMYLNDVFTVTTNLAGLPGLSLPAGLDANGLPLGLQIIGKPLDEGTVFSVAGVLEKAAGFTAKATKWW.

Catalysis depends on charge relay system residues lysine 78 and serine 158. The Acyl-ester intermediate role is filled by serine 182.

The protein belongs to the amidase family. GatA subfamily. In terms of assembly, heterotrimer of A, B and C subunits.

The catalysed reaction is L-glutamyl-tRNA(Gln) + L-glutamine + ATP + H2O = L-glutaminyl-tRNA(Gln) + L-glutamate + ADP + phosphate + H(+). Its function is as follows. Allows the formation of correctly charged Gln-tRNA(Gln) through the transamidation of misacylated Glu-tRNA(Gln) in organisms which lack glutaminyl-tRNA synthetase. The reaction takes place in the presence of glutamine and ATP through an activated gamma-phospho-Glu-tRNA(Gln). This is Glutamyl-tRNA(Gln) amidotransferase subunit A from Caulobacter sp. (strain K31).